The following is a 320-amino-acid chain: Biotin synthase 2 (320 aa).

The Radical SAM core domain maps to 34–261; sequence NVVQCSKLLS…ASYVRLSAGR (228 aa). Cysteine 49, cysteine 53, and cysteine 56 together coordinate [4Fe-4S] cluster. [2Fe-2S] cluster contacts are provided by cysteine 93, cysteine 124, cysteine 184, and arginine 256.

This sequence belongs to the radical SAM superfamily. Biotin synthase family. In terms of assembly, homodimer. [4Fe-4S] cluster is required as a cofactor. Requires [2Fe-2S] cluster as cofactor.

The catalysed reaction is (4R,5S)-dethiobiotin + (sulfur carrier)-SH + 2 reduced [2Fe-2S]-[ferredoxin] + 2 S-adenosyl-L-methionine = (sulfur carrier)-H + biotin + 2 5'-deoxyadenosine + 2 L-methionine + 2 oxidized [2Fe-2S]-[ferredoxin]. Its pathway is cofactor biosynthesis; biotin biosynthesis; biotin from 7,8-diaminononanoate: step 2/2. In terms of biological role, catalyzes the conversion of dethiobiotin (DTB) to biotin by the insertion of a sulfur atom into dethiobiotin via a radical-based mechanism. The chain is Biotin synthase 2 from Paracoccus denitrificans (strain Pd 1222).